We begin with the raw amino-acid sequence, 362 residues long: Methylthioribose-1-phosphate isomerase (362 aa).

Asp252 serves as the catalytic Proton donor.

This sequence belongs to the eIF-2B alpha/beta/delta subunits family. MtnA subfamily.

It localises to the cytoplasm. Its subcellular location is the nucleus. It carries out the reaction 5-(methylsulfanyl)-alpha-D-ribose 1-phosphate = 5-(methylsulfanyl)-D-ribulose 1-phosphate. Its pathway is amino-acid biosynthesis; L-methionine biosynthesis via salvage pathway; L-methionine from S-methyl-5-thio-alpha-D-ribose 1-phosphate: step 1/6. Functionally, catalyzes the interconversion of methylthioribose-1-phosphate (MTR-1-P) into methylthioribulose-1-phosphate (MTRu-1-P). This chain is Methylthioribose-1-phosphate isomerase, found in Drosophila pseudoobscura pseudoobscura (Fruit fly).